Reading from the N-terminus, the 563-residue chain is Septation ring formation regulator EzrA (563 aa).

Topologically, residues Met1–Glu2 are extracellular. Residues Leu3 to Phe21 form a helical membrane-spanning segment. Topologically, residues Arg22 to Ser563 are cytoplasmic. 3 coiled-coil regions span residues Glu133–His159, Lys243–Val276, and Ser309–Phe529.

Belongs to the EzrA family.

It localises to the cell membrane. In terms of biological role, negative regulator of FtsZ ring formation; modulates the frequency and position of FtsZ ring formation. Inhibits FtsZ ring formation at polar sites. Interacts either with FtsZ or with one of its binding partners to promote depolymerization. The chain is Septation ring formation regulator EzrA from Bacillus velezensis (strain DSM 23117 / BGSC 10A6 / LMG 26770 / FZB42) (Bacillus amyloliquefaciens subsp. plantarum).